Reading from the N-terminus, the 161-residue chain is MVNRLILMVVVVFITDSVMGTAEVMSHVTAHFGKALEECREESGLPVEVMDEFKHFWREDFEVVHRELGCAIICMSNKFELLQDDTRIHHVKMHDYIKSFPNGQVLSEKMVQLIHNCEKQYDDIADDCDRVVKVAACFKKDAKKEGIAPEVAMIEAVIEKY.

The first 20 residues, 1 to 20, serve as a signal peptide directing secretion; the sequence is MVNRLILMVVVVFITDSVMG. Intrachain disulfides connect Cys-39–Cys-74, Cys-70–Cys-128, and Cys-117–Cys-137.

This sequence belongs to the PBP/GOBP family. As to quaternary structure, homodimer. As to expression, olfactory tissue; expressed by the glia-like support cells that ensheathe the sensory neurons and line the base of the sensillum lumen.

Its function is as follows. Present in the aqueous fluid surrounding olfactory sensory dendrites and are thought to aid in the capture and transport of hydrophobic odorants into and through this fluid. The protein is General odorant-binding protein 2 (GOBP2) of Manduca sexta (Tobacco hawkmoth).